Here is a 483-residue protein sequence, read N- to C-terminus: Aspartyl/glutamyl-tRNA(Asn/Gln) amidotransferase subunit B (483 aa).

It belongs to the GatB/GatE family. GatB subfamily. Heterotrimer of A, B and C subunits.

The enzyme catalyses L-glutamyl-tRNA(Gln) + L-glutamine + ATP + H2O = L-glutaminyl-tRNA(Gln) + L-glutamate + ADP + phosphate + H(+). It catalyses the reaction L-aspartyl-tRNA(Asn) + L-glutamine + ATP + H2O = L-asparaginyl-tRNA(Asn) + L-glutamate + ADP + phosphate + 2 H(+). Allows the formation of correctly charged Asn-tRNA(Asn) or Gln-tRNA(Gln) through the transamidation of misacylated Asp-tRNA(Asn) or Glu-tRNA(Gln) in organisms which lack either or both of asparaginyl-tRNA or glutaminyl-tRNA synthetases. The reaction takes place in the presence of glutamine and ATP through an activated phospho-Asp-tRNA(Asn) or phospho-Glu-tRNA(Gln). In Thermomicrobium roseum (strain ATCC 27502 / DSM 5159 / P-2), this protein is Aspartyl/glutamyl-tRNA(Asn/Gln) amidotransferase subunit B.